The following is a 969-amino-acid chain: MMSDASDMLAAALEQMDGIIAGSKALEYSNGIFDCQSPTSPFMGSLRALHLVEDLRGLLEMMETDEKEGLRCQIPDSTAEVLIEWLQNQMTNGHLPGNGDVYQERLARLENDKESLVLQVSVLTDQVEAQGEKIRDLEFCLEEHREKLNATEEMLQQELLSRTSLETQKLELMAEISNLKLKLTAVEKDRLDYEDRFRDTEGLIQEINDLRLKVNEMDGERLQYEKKLKSTKDELASLKEQLEEKECEVKRLQERLVCKAKGEGIEVLDRDIEVQKMKKAVESLMAANEEKERKIEDLRQCLSRYRKMQDPAVLAQGQDSECEGLFHSSSISTLLDAQGFSDLERSTSSTPGMGSPSRDLLHTSAPEEFHTSVLQASIPSLLPPSVDVDTCEKPKLPTKPETSFEEGDGRAILGAAAEVSLSDGVSTSSLQKSSSLGNLKKEASDGTDKAPTDSRTFGTLPPKVPGHEASVDDNPFGTRKARSSFGRGFFKIKSGKRTASAPNLAETEKETAEHLNLAGTSRSKGSQGTSPFPMSPPSPDSRKKSRGIMRLFGKLRRSQSTTFNPDDMSEPEFKRGGTRATAGPRLGWSRDLGQSNSDLDMPFAKWTKEQVCSWLAEQGLGSYLSSGKHWIISGQTLLQASQQDLEKELGIKHSLHRKKLQLALQALGSEEETNYGKLDFNWVTRWLDDIGLPQYKTQFDEGRVDGRMLHYMTVDDLLSLKVVSVLHHLSIKRAIQVLRINNFEPNCLRRRPSDENSITPSEVQQWTNHRVMEWLRSVDLAEYAPNLRGSGVHGGLMVLEPRFNVETMAQLLNIPPNKTLLRRHLATHFNLLIGAEAQHQKRDAMELPDYVLLTATAKVKPKKLTFSNFGNLRKKKHEDGEEYVCPMELGQASGSSQKGFRPGLDMRLYEEDDLDRLEQMEDSEGTVRQIGAFSEGINNLTHMLKEDDMFKDFAARSPSASITDEDSNV.

S37 bears the Phosphoserine mark. T39 is modified (phosphothreonine). Phosphoserine is present on S40. The stretch at 99-310 (GDVYQERLAR…CLSRYRKMQD (212 aa)) forms a coiled coil. The residue at position 291 (K291) is an N6-acetyllysine. Disordered regions lie at residues 342–361 (DLERSTSSTPGMGSPSRDLL), 381–407 (LLPPSVDVDTCEKPKLPTKPETSFEEG), and 424–482 (GVST…RKAR). Residues 346-358 (STSSTPGMGSPSR) show a composition bias toward low complexity. 2 positions are modified to phosphoserine: S403 and S435. The segment covering 426 to 438 (STSSLQKSSSLGN) has biased composition (low complexity). Positions 439–452 (LKKEASDGTDKAPT) are enriched in basic and acidic residues. K440 is covalently cross-linked (Glycyl lysine isopeptide (Lys-Gly) (interchain with G-Cter in SUMO2)). S500 carries the post-translational modification Phosphoserine. The span at 518 to 529 (AGTSRSKGSQGT) shows a compositional bias: polar residues. Residues 518–593 (AGTSRSKGSQ…PRLGWSRDLG (76 aa)) form a disordered region. The residue at position 538 (S538) is a Phosphoserine. Residues 543–557 (KKSRGIMRLFGKLRR) show a composition bias toward basic residues. 2 positions are modified to phosphoserine: S560 and S595. SAM domains are found at residues 606–670 (WTKE…LGSE) and 678–741 (LDFN…LRIN). 2 positions are modified to phosphoserine: S753 and S757. Residues 763–835 (VQQWTNHRVM…ATHFNLLIGA (73 aa)) enclose the SAM 3 domain. S957, S959, and S961 each carry phosphoserine. T963 bears the Phosphothreonine mark.

It belongs to the liprin family. Liprin-beta subfamily. As to quaternary structure, forms homodimers and heterodimers. Interacts with S100A4 in a Ca(2+)-dependent mode. Part of a cortical microtubule stabilization complex (CMSC) composed of KANK1, PPFIA1, PPFIBP1, ERC1/ELKS, PHLDB2/LL5beta, CLASPs, KIF21A and possibly additional interactors; within CMSCs KANK1 and PHLDB2/LL5beta seem to be the core components for recruiting microtubule-binding proteins KIF21A and CLASPs, whereas PPFIA1, PPFIBP1 and ERC1/ELKS serve as scaffolds for protein clustering. Interacts with KANK1 (via CC1 domain, residues 244-339).

It localises to the cytoplasm. It is found in the cell cortex. Its function is as follows. May regulate the disassembly of focal adhesions. Did not bind receptor-like tyrosine phosphatases type 2A. This Mus musculus (Mouse) protein is Liprin-beta-1 (Ppfibp1).